The sequence spans 352 residues: Glycerol-3-phosphate dehydrogenase [NAD(P)+] (352 aa).

3 residues coordinate NADPH: Trp-11, Arg-37, and Lys-112. Sn-glycerol 3-phosphate-binding residues include Lys-112, Gly-153, and Ser-155. An NADPH-binding site is contributed by Ala-157. Positions 208, 261, 271, 272, and 273 each coordinate sn-glycerol 3-phosphate. The Proton acceptor role is filled by Lys-208. Arg-272 contacts NADPH. Residues Val-296 and Glu-298 each coordinate NADPH.

Belongs to the NAD-dependent glycerol-3-phosphate dehydrogenase family.

The protein resides in the cytoplasm. The catalysed reaction is sn-glycerol 3-phosphate + NAD(+) = dihydroxyacetone phosphate + NADH + H(+). It catalyses the reaction sn-glycerol 3-phosphate + NADP(+) = dihydroxyacetone phosphate + NADPH + H(+). Its pathway is membrane lipid metabolism; glycerophospholipid metabolism. Catalyzes the reduction of the glycolytic intermediate dihydroxyacetone phosphate (DHAP) to sn-glycerol 3-phosphate (G3P), the key precursor for phospholipid synthesis. The protein is Glycerol-3-phosphate dehydrogenase [NAD(P)+] of Polaromonas naphthalenivorans (strain CJ2).